Consider the following 26-residue polypeptide: Morintide mO4 (26 aa).

The region spanning 1–26 (NRLCCSQYGFCGTTSEYCSRVSGCQS) is the Chitin-binding type-1 domain. Cys-4 and Cys-18 are joined by a disulfide.

Seeds (at protein level).

Chitin-binding protein which functions in defense against chitin-containing fungal pathogens. In Moringa oleifera (Horseradish tree), this protein is Morintide mO4.